The primary structure comprises 488 residues: Aerolysin (488 aa).

An N-terminal signal peptide occupies residues 1 to 24 (MMNRIITANLAFLASSLMLAQVQA). Disulfide bonds link cysteine 43/cysteine 99 and cysteine 183/cysteine 188. Positions 69-85 (WQITGLADRWVIMGPGY) are interaction with host N-linked glycan. A part of the transmembrane beta-barrel after proteolytic activation of the toxin and insertion into the host membrane region spans residues 256-288 (YSLSEKVTTKNKFQWPLVGETELAIEIAASQSW). The interval 346-355 (RWGGNAWYTH) is interaction with glycans from host GPI-anchor. Residues 444-488 (TRSAKAAQLRSASAEEVALTSVDLDSEALANEGFGNVSLTIVPVQ) constitute a propeptide that is removed on maturation.

It belongs to the aerolysin family. In terms of assembly, homodimer in solution; homoheptamer in the host membrane. After binding to GPI-anchored proteins in target membranes and proteolytic removal of the C-terminal propeptide, the protein assembles into a heptameric pre-pore complex. A further conformation change leads to insertion into the host membrane. In terms of processing, proteolytic cleavage and subsequent release of the propeptide trigger a major conformation change, leading to the formation of a heptameric pre-pore that then inserts into the host membrane.

It localises to the secreted. It is found in the host cell membrane. In terms of biological role, secreted, cytolytic toxin that forms pores in host membranes after proteolytic removal of a C-terminal propeptide, leading to destruction of the membrane permeability barrier and cell death. The pores are formed by transmembrane beta-strands and are approximately 3 nm in diameter. This chain is Aerolysin (asa1), found in Aeromonas sobria.